The following is a 110-amino-acid chain: Large ribosomal subunit protein uL22 (110 aa).

This sequence belongs to the universal ribosomal protein uL22 family. Part of the 50S ribosomal subunit.

This protein binds specifically to 23S rRNA; its binding is stimulated by other ribosomal proteins, e.g. L4, L17, and L20. It is important during the early stages of 50S assembly. It makes multiple contacts with different domains of the 23S rRNA in the assembled 50S subunit and ribosome. In terms of biological role, the globular domain of the protein is located near the polypeptide exit tunnel on the outside of the subunit, while an extended beta-hairpin is found that lines the wall of the exit tunnel in the center of the 70S ribosome. This is Large ribosomal subunit protein uL22 from Syntrophobacter fumaroxidans (strain DSM 10017 / MPOB).